Consider the following 166-residue polypeptide: Lipoprotein signal peptidase (166 aa).

4 helical membrane passes run 10–30, 32–52, 71–91, and 100–120; these read GGAL…DQLT, IAVL…FFNL, WQRW…CYLL, and FSLS…DRLI. Catalysis depends on residues Asp126 and Asp144. The chain crosses the membrane as a helical span at residues 135–155; the sequence is WHWPAFNLADSAITVGAVLLI.

The protein belongs to the peptidase A8 family.

The protein localises to the cell inner membrane. It carries out the reaction Release of signal peptides from bacterial membrane prolipoproteins. Hydrolyzes -Xaa-Yaa-Zaa-|-(S,diacylglyceryl)Cys-, in which Xaa is hydrophobic (preferably Leu), and Yaa (Ala or Ser) and Zaa (Gly or Ala) have small, neutral side chains.. It participates in protein modification; lipoprotein biosynthesis (signal peptide cleavage). Its function is as follows. This protein specifically catalyzes the removal of signal peptides from prolipoproteins. This chain is Lipoprotein signal peptidase, found in Burkholderia mallei (strain ATCC 23344).